Reading from the N-terminus, the 807-residue chain is MHIFVPKLLENHQFSSISSSKDFVAVSAETNVYILSKDFFYPKSSEKRIIQSLNGHKTTHLSFDSPISCIRFTYDGSCLAVATEAGTFLYHSEKWDKAFQVLSGPAYEVCWSQQGHILATSWKQISIYVKDEGLRTETIVKKTEHADSNHQPAVSIEESKEAVESTSQSSEISFKLIKVIEGHHTFVGGLAFDPMGQFLASQSFDHTLKVWKLSTFGVEKSIAKPFEQMPTGNRFLRLSWSPDGAHIASVNAVNEGAYVIAIVQRDTWTYDINLVGHQGPLECATFNPYLYEDPFQKSIIASAAHDGCVSIWNTACARPMAVIHELSCSSFVDLQWSTSGFELYGVSLDGNLMLLQFEESEFGEKMDTIHYPDDLSYFNSSRSKAHVNKNAAADRTTSPTQGQPESPSKSILLRPPPSIASSPESKRRKCPKKFVARPPVPHPTSLYSQIRIGCPYLKPKLVISKSFGTLIVKNHNQLSLLKCTFSNLDGNDCSWFSYLPNAIVLANGTSVFWAVATEDSSIYIYSPAGRLLLPPVVVAATPCFLECCGDFLCCIVSTGLLYIWNIKNFEAIHSPVSTLPLFHSNFSVSKIARGPSIEQFFVTKQGHPVAIMSDGNAFAFIRDSSSWLRVSEGWWMIGSQYWGPLASESNEESPLGFLERCTDEEIIKAGRGRFLQRLVKALMLRQGYDNYEMLVSIRHLENRLMSSAKLDLEYDFRENLILYAKKIAEEGMKDKMDELCKELLGPLRIPHNGIDTVKVGNRLWSPTIAGNNKRNLLKDIIIHTAKYRDMQRITSQYSDLLRRSALL.

WD repeat units lie at residues 62–100 (SFDS…KAFQ) and 102–140 (LSGP…ETIV). A disordered region spans residues 144-164 (EHADSNHQPAVSIEESKEAVE). WD repeat units follow at residues 182–221 (GHHT…VEKS), 230–273 (PTGN…YDIN), 276–322 (GHQG…PMAV), and 326–367 (LSCS…EKMD). Positions 388-437 (NKNAAADRTTSPTQGQPESPSKSILLRPPPSIASSPESKRRKCPKKFVAR) are disordered. Polar residues predominate over residues 395 to 409 (RTTSPTQGQPESPSK). Phosphoserine is present on residues serine 406, serine 421, and serine 422. The segment covering 426–435 (KRRKCPKKFV) has biased composition (basic residues). WD repeat units follow at residues 492–526 (DCSW…YIYS) and 528–574 (AGRL…AIHS).

It belongs to the WD repeat HIR1 family. As to quaternary structure, interacts with hip1 and hip3.

The protein resides in the cytoplasm. Its subcellular location is the nucleus. Functionally, probably required for replication-independent chromatin assembly. Required for transcriptional silencing in the outer repeat (otr) centromeric repeats and the Tf2 long terminal repeat retrotransposons. May play an indirect role in the regulation of cdc2 and/or wee1 at the G2/M stage of mitosis. In Schizosaccharomyces pombe (strain 972 / ATCC 24843) (Fission yeast), this protein is Histone transcription regulator slm9 (slm9).